Consider the following 244-residue polypeptide: Phosphoadenosine 5'-phosphosulfate reductase (244 aa).

Cys239 (nucleophile; cysteine thiosulfonate intermediate) is an active-site residue.

This sequence belongs to the PAPS reductase family. CysH subfamily.

Its subcellular location is the cytoplasm. The catalysed reaction is [thioredoxin]-disulfide + sulfite + adenosine 3',5'-bisphosphate + 2 H(+) = [thioredoxin]-dithiol + 3'-phosphoadenylyl sulfate. Its pathway is sulfur metabolism; hydrogen sulfide biosynthesis; sulfite from sulfate: step 3/3. In terms of biological role, catalyzes the formation of sulfite from phosphoadenosine 5'-phosphosulfate (PAPS) using thioredoxin as an electron donor. The polypeptide is Phosphoadenosine 5'-phosphosulfate reductase (Salmonella heidelberg (strain SL476)).